The sequence spans 263 residues: Pimeloyl-[acyl-carrier protein] methyl ester esterase (263 aa).

Residues W23, 90–91 (SL), and 152–156 (FLTLQ) contribute to the substrate site. S90 acts as the Nucleophile in catalysis. Residues D216 and H244 contribute to the active site. H244 is a substrate binding site.

Belongs to the AB hydrolase superfamily. Carboxylesterase BioH family. Monomer.

Its subcellular location is the cytoplasm. The enzyme catalyses 6-carboxyhexanoyl-[ACP] methyl ester + H2O = 6-carboxyhexanoyl-[ACP] + methanol + H(+). Its pathway is cofactor biosynthesis; biotin biosynthesis. Functionally, the physiological role of BioH is to remove the methyl group introduced by BioC when the pimeloyl moiety is complete. It allows to synthesize pimeloyl-ACP via the fatty acid synthetic pathway through the hydrolysis of the ester bonds of pimeloyl-ACP esters. This Nitrosospira multiformis (strain ATCC 25196 / NCIMB 11849 / C 71) protein is Pimeloyl-[acyl-carrier protein] methyl ester esterase.